Here is a 188-residue protein sequence, read N- to C-terminus: ATP synthase subunit delta (188 aa).

It belongs to the ATPase delta chain family. F-type ATPases have 2 components, F(1) - the catalytic core - and F(0) - the membrane proton channel. F(1) has five subunits: alpha(3), beta(3), gamma(1), delta(1), epsilon(1). F(0) has three main subunits: a(1), b(2) and c(10-14). The alpha and beta chains form an alternating ring which encloses part of the gamma chain. F(1) is attached to F(0) by a central stalk formed by the gamma and epsilon chains, while a peripheral stalk is formed by the delta and b chains.

Its subcellular location is the cell inner membrane. F(1)F(0) ATP synthase produces ATP from ADP in the presence of a proton or sodium gradient. F-type ATPases consist of two structural domains, F(1) containing the extramembraneous catalytic core and F(0) containing the membrane proton channel, linked together by a central stalk and a peripheral stalk. During catalysis, ATP synthesis in the catalytic domain of F(1) is coupled via a rotary mechanism of the central stalk subunits to proton translocation. Functionally, this protein is part of the stalk that links CF(0) to CF(1). It either transmits conformational changes from CF(0) to CF(1) or is implicated in proton conduction. The sequence is that of ATP synthase subunit delta from Agrobacterium fabrum (strain C58 / ATCC 33970) (Agrobacterium tumefaciens (strain C58)).